A 403-amino-acid polypeptide reads, in one-letter code: Aspartate aminotransferase, cytoplasmic isozyme 2 (403 aa).

Residue M1 is modified to N-acetylmethionine. 3 residues coordinate L-aspartate: G37, W132, and N185. An N6-(pyridoxal phosphate)lysine modification is found at K249. R377 is a binding site for L-aspartate.

It belongs to the class-I pyridoxal-phosphate-dependent aminotransferase family. Homodimer. Pyridoxal 5'-phosphate serves as cofactor.

The protein resides in the cytoplasm. The catalysed reaction is L-aspartate + 2-oxoglutarate = oxaloacetate + L-glutamate. Functionally, important for the metabolism of amino acids and Krebs-cycle related organic acids. In plants, it is involved in nitrogen metabolism and in aspects of carbon and energy metabolism. This Arabidopsis thaliana (Mouse-ear cress) protein is Aspartate aminotransferase, cytoplasmic isozyme 2 (ASP4).